Consider the following 364-residue polypeptide: DNA replication and repair protein RecF (364 aa).

An ATP-binding site is contributed by 30–37 (GENAQGKT).

Belongs to the RecF family.

Its subcellular location is the cytoplasm. Its function is as follows. The RecF protein is involved in DNA metabolism; it is required for DNA replication and normal SOS inducibility. RecF binds preferentially to single-stranded, linear DNA. It also seems to bind ATP. The polypeptide is DNA replication and repair protein RecF (Streptococcus suis (strain 98HAH33)).